Reading from the N-terminus, the 34-residue chain is AXSGKLQWIGASESGAEFGQGNLPGVVGTDYTFP.

The catalysed reaction is Endohydrolysis of (1-&gt;4)-beta-D-glucosidic linkages in cellulose, lichenin and cereal beta-D-glucans.. This Sclerotinia sclerotiorum (White mold) protein is Endoglucanase 1.